The sequence spans 309 residues: Cytochrome c biogenesis protein CcsA (309 aa).

The next 8 helical transmembrane spans lie at 18–38 (LGLLVFYILLVNLPISLGAFF), 43–63 (FFIVRVLTILINFLITLQLLF), 67–87 (ISGHFPISNLYESLYFLTWGI), 102–122 (IIPSIAIPIELLTVAFACFVL), 148–168 (VMLSYAALIIGSLLSASVLFI), 216–236 (SILIGFVLLTLGLISGAVWAN), 250–267 (TWAFISWMFYAAYLHMRI), and 279–299 (LATTGFLVVLICYLGVNFLGI).

This sequence belongs to the CcmF/CycK/Ccl1/NrfE/CcsA family. In terms of assembly, may interact with ccs1.

Its subcellular location is the cellular thylakoid membrane. Its function is as follows. Required during biogenesis of c-type cytochromes (cytochrome c6 and cytochrome f) at the step of heme attachment. This Prochlorococcus marinus (strain MIT 9215) protein is Cytochrome c biogenesis protein CcsA.